The following is a 533-amino-acid chain: MAFANLRKVLISDSLDPCCRKILQDGGLQVVEKQNLSKEELIAELQDCEGLIVRSATKVTADVINAAEKLQVVGRAGTGVDNVDLEAATRKGILVMNTPNGNSLSAAELTCGMIMCLARQIPQATASMKDGKWERKKFMGTELNGKTLGILGLGRIGREVATRMQSFGMKTIGYDPIISPEVSASFGVQQLPLEEIWPLCDFITVHTPLLPSTTGLLNDNTFAQCKKGVRVVNCARGGIVDEGALLRALQSGQCAGAALDVFTEEPPRDRALVDHENVISCPHLGASTKEAQSRCGEEIAVQFVDMVKGKSLTGVVNAQALTSAFSPHTKPWIGLAEALGTLMRAWAGSPKGTIQVITQGTSLKNAGNCLSPAVIVGLLKEASKQADVNLVNAKLLVKEAGLNVTTSHSPAAPGEQGFGECLLAVALAGAPYQAVGLVQGTTPVLQGLNGAVFRPEVPLRRDLPLLLFRTQTSDPAMPPTMMGLLAEAGVRLLSYQTSLVSDGETWHVMGIPSLLPSLEAWKQHVTEAFQFHF.

N-acetylalanine is present on A2. S14 carries the post-translational modification Phosphoserine. Position 21 is an N6-acetyllysine; alternate (K21). K21 is covalently cross-linked (Glycyl lysine isopeptide (Lys-Gly) (interchain with G-Cter in SUMO1); alternate). Residue K21 forms a Glycyl lysine isopeptide (Lys-Gly) (interchain with G-Cter in SUMO2); alternate linkage. K58 is subject to N6-acetyllysine. Residues T78, 155–156 (RI), D175, T207, 234–236 (CAR), and D260 each bind NAD(+). T78 is modified (phosphothreonine). The active site involves R236. The active site involves E265. The active-site Proton donor is the H283. 283–286 (HLGA) provides a ligand contact to NAD(+).

Belongs to the D-isomer specific 2-hydroxyacid dehydrogenase family. In terms of assembly, homotetramer.

The enzyme catalyses (2R)-3-phosphoglycerate + NAD(+) = 3-phosphooxypyruvate + NADH + H(+). It catalyses the reaction (R)-2-hydroxyglutarate + NAD(+) = 2-oxoglutarate + NADH + H(+). The catalysed reaction is (S)-malate + NAD(+) = oxaloacetate + NADH + H(+). Its pathway is amino-acid biosynthesis; L-serine biosynthesis; L-serine from 3-phospho-D-glycerate: step 1/3. In terms of biological role, catalyzes the reversible oxidation of 3-phospho-D-glycerate to 3-phosphonooxypyruvate, the first step of the phosphorylated L-serine biosynthesis pathway. Also catalyzes the reversible oxidation of 2-hydroxyglutarate to 2-oxoglutarate and the reversible oxidation of (S)-malate to oxaloacetate. The polypeptide is D-3-phosphoglycerate dehydrogenase (PHGDH) (Pan troglodytes (Chimpanzee)).